A 307-amino-acid polypeptide reads, in one-letter code: Oxygen-dependent coproporphyrinogen-III oxidase (307 aa).

Serine 99 contacts substrate. A divalent metal cation contacts are provided by histidine 103 and histidine 113. Catalysis depends on histidine 113, which acts as the Proton donor. 115–117 (NVR) is a substrate binding site. A divalent metal cation is bound by residues histidine 152 and histidine 182. The important for dimerization stretch occupies residues 247–282 (YVEFNLVFDRGTLFGLQSGGRTESILLSMPPTAGWR). 265–267 (GGR) is a substrate binding site.

The protein belongs to the aerobic coproporphyrinogen-III oxidase family. In terms of assembly, homodimer. The cofactor is a divalent metal cation.

The protein localises to the cytoplasm. It carries out the reaction coproporphyrinogen III + O2 + 2 H(+) = protoporphyrinogen IX + 2 CO2 + 2 H2O. It participates in porphyrin-containing compound metabolism; protoporphyrin-IX biosynthesis; protoporphyrinogen-IX from coproporphyrinogen-III (O2 route): step 1/1. Involved in the heme biosynthesis. Catalyzes the aerobic oxidative decarboxylation of propionate groups of rings A and B of coproporphyrinogen-III to yield the vinyl groups in protoporphyrinogen-IX. This Burkholderia pseudomallei (strain 1106a) protein is Oxygen-dependent coproporphyrinogen-III oxidase.